A 463-amino-acid chain; its full sequence is Gamma-aminobutyric acid receptor subunit alpha-5 (463 aa).

An N-terminal signal peptide occupies residues 1-25 (MDNGMLSRFIMTQTLLVFCISMTLS). The Extracellular segment spans residues 26–260 (SHFGFSQMPT…FHLKRKIGYF (235 aa)). N-linked (GlcNAc...) asparagine glycosylation occurs at asparagine 45. Arginine 101 contributes to the 4-aminobutanoate binding site. Asparagine 145 carries an N-linked (GlcNAc...) asparagine glycan. Threonine 164 is a 4-aminobutanoate binding site. The cysteines at positions 173 and 187 are disulfide-linked. 2 N-linked (GlcNAc...) asparagine glycosylation sites follow: asparagine 207 and asparagine 236. 3 helical membrane-spanning segments follow: residues 261-281 (VIQT…SFWL), 287-308 (PART…ISAR), and 319-340 (AMDW…EFAT). Over 341 to 428 (VNYFTKRGWA…TYNSISKIDK (88 aa)) the chain is Cytoplasmic. Residue lysine 355 forms a Glycyl lysine isopeptide (Lys-Gly) (interchain with G-Cter in ubiquitin) linkage. The segment at 387-408 (PNIPKEQPPAGTANAPTVSIKA) is disordered. Residues 429–449 (MSRIVFPILFGTFNLVYWATY) form a helical membrane-spanning segment.

Belongs to the ligand-gated ion channel (TC 1.A.9) family. Gamma-aminobutyric acid receptor (TC 1.A.9.5) subfamily. GABRA5 sub-subfamily. In terms of assembly, heteropentamer, formed by a combination of alpha (GABRA1-6), beta (GABRB1-3), gamma (GABRG1-3), delta (GABRD), epsilon (GABRE), rho (GABRR1-3), pi (GABRP) and theta (GABRQ) chains, each subunit exhibiting distinct physiological and pharmacological properties. As to expression, expressed in brain, in hippocampal pyramidal neurons.

Its subcellular location is the postsynaptic cell membrane. It is found in the cell membrane. The catalysed reaction is chloride(in) = chloride(out). Its function is as follows. Alpha subunit of the heteropentameric ligand-gated chloride channel gated by gamma-aminobutyric acid (GABA), a major inhibitory neurotransmitter in the brain. GABA-gated chloride channels, also named GABA(A) receptors (GABAAR), consist of five subunits arranged around a central pore and contain GABA active binding site(s) located at the alpha and beta subunit interface(s). When activated by GABA, GABAARs selectively allow the flow of chloride anions across the cell membrane down their electrochemical gradient. GABAARs containing alpha-5/GABRA5 are mainly extrasynaptic and contribute to the tonic GABAergic inhibition of the hippocampus. Extrasynaptic alpha-5-containing GABAARs in CA1 pyramidal neurons play a role in learning and memory processes. The chain is Gamma-aminobutyric acid receptor subunit alpha-5 from Mus musculus (Mouse).